Here is a 377-residue protein sequence, read N- to C-terminus: Lipoyl synthase, mitochondrial (377 aa).

Residues 1–77 (MFRRGGRILN…LPNGSVHKRL (77 aa)) constitute a mitochondrion transit peptide. Residues Cys-107, Cys-112, Cys-118, Cys-138, Cys-142, Cys-145, and Ser-353 each contribute to the [4Fe-4S] cluster site. Positions 123 to 342 (DKTRATATIM…RKRAEELGFL (220 aa)) constitute a Radical SAM core domain.

It belongs to the radical SAM superfamily. Lipoyl synthase family. [4Fe-4S] cluster serves as cofactor.

The protein localises to the mitochondrion. It catalyses the reaction [[Fe-S] cluster scaffold protein carrying a second [4Fe-4S](2+) cluster] + N(6)-octanoyl-L-lysyl-[protein] + 2 oxidized [2Fe-2S]-[ferredoxin] + 2 S-adenosyl-L-methionine + 4 H(+) = [[Fe-S] cluster scaffold protein] + N(6)-[(R)-dihydrolipoyl]-L-lysyl-[protein] + 4 Fe(3+) + 2 hydrogen sulfide + 2 5'-deoxyadenosine + 2 L-methionine + 2 reduced [2Fe-2S]-[ferredoxin]. It participates in protein modification; protein lipoylation via endogenous pathway; protein N(6)-(lipoyl)lysine from octanoyl-[acyl-carrier-protein]: step 2/2. Its function is as follows. Catalyzes the radical-mediated insertion of two sulfur atoms into the C-6 and C-8 positions of the octanoyl moiety bound to the lipoyl domains of lipoate-dependent enzymes, thereby converting the octanoylated domains into lipoylated derivatives. The sequence is that of Lipoyl synthase, mitochondrial from Schizosaccharomyces japonicus (strain yFS275 / FY16936) (Fission yeast).